An 815-amino-acid polypeptide reads, in one-letter code: Translation initiation factor IF-2 (815 aa).

The region spanning 315–482 (ARPPVVTIMG…AISLTAEVLE (168 aa)) is the tr-type G domain. Residues 324-331 (GHVDHGKT) are G1. GTP is bound at residue 324–331 (GHVDHGKT). The segment at 349-353 (GITQH) is G2. The tract at residues 370–373 (DTPG) is G3. GTP contacts are provided by residues 370-374 (DTPGH) and 424-427 (NKID). The tract at residues 424-427 (NKID) is G4. The interval 460–462 (SAY) is G5.

It belongs to the TRAFAC class translation factor GTPase superfamily. Classic translation factor GTPase family. IF-2 subfamily.

Its subcellular location is the cytoplasm. One of the essential components for the initiation of protein synthesis. Protects formylmethionyl-tRNA from spontaneous hydrolysis and promotes its binding to the 30S ribosomal subunits. Also involved in the hydrolysis of GTP during the formation of the 70S ribosomal complex. The chain is Translation initiation factor IF-2 from Ruthia magnifica subsp. Calyptogena magnifica.